The following is a 300-amino-acid chain: 33 kDa chaperonin (300 aa).

2 disulfides stabilise this stretch: C235-C237 and C269-C272.

This sequence belongs to the HSP33 family. In terms of processing, under oxidizing conditions two disulfide bonds are formed involving the reactive cysteines. Under reducing conditions zinc is bound to the reactive cysteines and the protein is inactive.

It is found in the cytoplasm. In terms of biological role, redox regulated molecular chaperone. Protects both thermally unfolding and oxidatively damaged proteins from irreversible aggregation. Plays an important role in the bacterial defense system toward oxidative stress. This Pseudomonas syringae pv. tomato (strain ATCC BAA-871 / DC3000) protein is 33 kDa chaperonin.